Reading from the N-terminus, the 644-residue chain is uncharacterized protein (644 aa).

Residues 16 to 38 traverse the membrane as a helical segment; that stretch reads LLSYLGVVGVGIAGLCIYRSVWG. Residues 586–603 show a composition bias toward basic and acidic residues; the sequence is VRQLQKEAGEGEAEEHPR. The tract at residues 586–613 is disordered; sequence VRQLQKEAGEGEAEEHPRARPAAGKAQR.

It is found in the membrane. This is an uncharacterized protein from Treponema pallidum (strain Nichols).